We begin with the raw amino-acid sequence, 889 residues long: Alanine--tRNA ligase (889 aa).

Positions 564, 568, 671, and 675 each coordinate Zn(2+).

This sequence belongs to the class-II aminoacyl-tRNA synthetase family. Zn(2+) serves as cofactor.

The protein localises to the cytoplasm. It catalyses the reaction tRNA(Ala) + L-alanine + ATP = L-alanyl-tRNA(Ala) + AMP + diphosphate. In terms of biological role, catalyzes the attachment of alanine to tRNA(Ala) in a two-step reaction: alanine is first activated by ATP to form Ala-AMP and then transferred to the acceptor end of tRNA(Ala). Also edits incorrectly charged Ser-tRNA(Ala) and Gly-tRNA(Ala) via its editing domain. The protein is Alanine--tRNA ligase of Pelagibacter ubique (strain HTCC1062).